A 341-amino-acid chain; its full sequence is Phosphate acyltransferase (341 aa).

It belongs to the PlsX family. As to quaternary structure, homodimer. Probably interacts with PlsY.

It is found in the cytoplasm. The enzyme catalyses a fatty acyl-[ACP] + phosphate = an acyl phosphate + holo-[ACP]. Its pathway is lipid metabolism; phospholipid metabolism. Its function is as follows. Catalyzes the reversible formation of acyl-phosphate (acyl-PO(4)) from acyl-[acyl-carrier-protein] (acyl-ACP). This enzyme utilizes acyl-ACP as fatty acyl donor, but not acyl-CoA. This is Phosphate acyltransferase from Idiomarina loihiensis (strain ATCC BAA-735 / DSM 15497 / L2-TR).